An 84-amino-acid chain; its full sequence is Small ribosomal subunit protein uS17 (84 aa).

Belongs to the universal ribosomal protein uS17 family. In terms of assembly, part of the 30S ribosomal subunit.

Its function is as follows. One of the primary rRNA binding proteins, it binds specifically to the 5'-end of 16S ribosomal RNA. This chain is Small ribosomal subunit protein uS17, found in Vibrio cholerae serotype O1 (strain ATCC 39541 / Classical Ogawa 395 / O395).